We begin with the raw amino-acid sequence, 208 residues long: V-type ATP synthase subunit D (208 aa).

The protein belongs to the V-ATPase D subunit family.

Produces ATP from ADP in the presence of a proton gradient across the membrane. The sequence is that of V-type ATP synthase subunit D from Streptococcus pyogenes serotype M1.